A 498-amino-acid polypeptide reads, in one-letter code: UDP-N-acetylmuramoylalanine--D-glutamate ligase (498 aa).

119–125 (GTNGKST) contributes to the ATP binding site.

It belongs to the MurCDEF family.

The protein localises to the cytoplasm. The enzyme catalyses UDP-N-acetyl-alpha-D-muramoyl-L-alanine + D-glutamate + ATP = UDP-N-acetyl-alpha-D-muramoyl-L-alanyl-D-glutamate + ADP + phosphate + H(+). Its pathway is cell wall biogenesis; peptidoglycan biosynthesis. Functionally, cell wall formation. Catalyzes the addition of glutamate to the nucleotide precursor UDP-N-acetylmuramoyl-L-alanine (UMA). The protein is UDP-N-acetylmuramoylalanine--D-glutamate ligase of Wolbachia sp. subsp. Brugia malayi (strain TRS).